A 494-amino-acid polypeptide reads, in one-letter code: MELSLESLGGLHSVAHAQAGELLSPGHARSAAAQHRGLVAPGRPGLVAGMASLLDGGGGGGGGGAGGAGGAGSAGGGADFRGELAGPLHPAMGMACEAPGLGGTYTTLTPLQHLPPLAAVADKFHQHAAAAAVAGAHGGHPHAHPHPAAAPPPPPPPQRLAASVSGSFTLMRDERAALASVGHLYGPYGKELPAMGSPLSPLPNALPPALHGAPQPPPPPPPPPLAAYGPPGHLAGDKLLPPAAFEPHAALLGRAEDALARGLPGGGGGTGSGGAGSGSAAGLLAPLGGLAAAGAHGPHGGGGGPGGSGGGPSAGAAAEEINTKEVAQRITAELKRYSIPQAIFAQRILCRSQGTLSDLLRNPKPWSKLKSGRETFRRMWKWLQEPEFQRMSALRLAACKRKEQEQQKERALQPKKQRLVFTDLQRRTLIAIFKENKRPSKEMQVTISQQLGLELNTVSNFFMNARRRCMNRWAEEPSTAPGGPAGATATFSKA.

Disordered stretches follow at residues Ala130–Ala162, Leu199–Leu239, and Ala295–Glu319. Composition is skewed to pro residues over residues Ala148–Gln158 and Pro214–Leu225. The span at Gly297–Ser313 shows a compositional bias: gly residues. A DNA-binding region (CUT) is located at residues Pro312–Ala398. The homeobox DNA-binding region spans Pro414 to Trp473. Residues Glu475 to Ala494 are disordered. Residues Glu476–Ala494 show a composition bias toward low complexity.

The protein belongs to the CUT homeobox family.

Its subcellular location is the nucleus. Functionally, transcriptional activator. Binds the consensus DNA sequence 5'-DHWATTGAYTWWD-3' on a variety of gene promoters such as those of HNF3B and TTR. The polypeptide is One cut domain family member 3 (ONECUT3) (Homo sapiens (Human)).